The primary structure comprises 287 residues: Heavy metal-associated isoprenylated plant protein 4 (287 aa).

2 consecutive HMA domains span residues 14–80 and 112–176; these read IITA…VELI and IRTT…KHAE. A metal cation-binding residues include Cys25, Cys28, Cys123, and Cys126. The stretch at 179 to 235 forms a coiled coil; it reads SSKTEEEKKKEEEDKKKKEEEDKKKKEDEKKKEEEKKKEEENKKKEGEKKKEEVKVE. Residues 181-232 form a disordered region; it reads KTEEEKKKEEEDKKKKEEEDKKKKEDEKKKEEEKKKEEENKKKEGEKKKEEV. Cys284 carries the post-translational modification Cysteine methyl ester. Residue Cys284 is the site of S-farnesyl cysteine attachment. Positions 285–287 are cleaved as a propeptide — removed in mature form; the sequence is RIV.

The protein belongs to the HIPP family.

Heavy-metal-binding protein. The chain is Heavy metal-associated isoprenylated plant protein 4 from Arabidopsis thaliana (Mouse-ear cress).